The chain runs to 732 residues: MDKDSKRPVVGSTVRGGMSNRDWWPNQLNLSILHQQSNKSNPMGEDFDYAKEFKKLNLAAVKKDLYALMTDSQEWWPADYGHYGGLFIRMAWHSAGTYRMGDGRGGAGSGSQRLAPLNSWPDNANLDKARRLLWPIKKKYGKRISWADLMVLAGNCALESMGFKTFGFAGGREDVWEPETDIYWGAEEEWLATSDKPKSRYSGDRDLENPLAAVQMGLIYVNPEGPDGNPDPVAAGYDVIETFARMAMDPEETVALVAGGHTFGKCHGAGPASHVGPEPEAAPIEAQGLGWKSSFGTGKGGDTITSGIEGAWKPYPTRWDMGYLKVLFKYEWELVKSPAGAYQWLAMDVDEEDMVIDAHDPSKKHRPMMTTADLSLRFDPVLGPIAKRFSKNPKAFADAFARAWFKLTHRDMGPRSRYLGPEVPKKELIWQDPVPAVNHKLIGARDIAALKREILASGLSVSQLVYTAWSSAVTFRGSDKRGGANGARIRLAPQKEWEVNQPAQLKKVLAKLEKIRRAFNSAQSDGKKVSLADLIVLGGCAAIEQAARNAGYKGTVPFKPGRMDATQKQTDAASFAVLEPLADGFRNYLKAKFTVSAEELLIDKARLLTLTAPEMTVLIGGMRVLNANYGQSPHGVFTKRPETLTNDFFVNLLDMGTVWNPAKADDCVFEGRDRQTGALRWTGTRVDLLFGSNSQLRAIAEVYACKDAGEKFVNDFVAVWNKVMNADRFDLA.

The tract at residues 1–20 is disordered; the sequence is MDKDSKRPVVGSTVRGGMSN. The segment at residues 92 to 220 is a cross-link (tryptophyl-tyrosyl-methioninium (Trp-Tyr) (with M-246)); sequence WHSAGTYRMG…LAAVQMGLIY (129 aa). Residue His93 is the Proton acceptor of the active site. A cross-link (tryptophyl-tyrosyl-methioninium (Tyr-Met) (with W-92)) is located at residues 220-246; it reads YVNPEGPDGNPDPVAAGYDVIETFARM. Heme b is bound at residue His261.

Belongs to the peroxidase family. Peroxidase/catalase subfamily. Homodimer or homotetramer. Heme b serves as cofactor. Post-translationally, formation of the three residue Trp-Tyr-Met cross-link is important for the catalase, but not the peroxidase activity of the enzyme.

It carries out the reaction H2O2 + AH2 = A + 2 H2O. The catalysed reaction is 2 H2O2 = O2 + 2 H2O. Its function is as follows. Bifunctional enzyme with both catalase and broad-spectrum peroxidase activity. This is Catalase-peroxidase from Desulfosudis oleivorans (strain DSM 6200 / JCM 39069 / Hxd3) (Desulfococcus oleovorans).